Consider the following 224-residue polypeptide: Homeobox protein Hox-B6 (224 aa).

An Antp-type hexapeptide motif is present at residues 127 to 132 (VYPWMQ). Residues 146-205 (GRRGRQTYTRYQTLELEKEFHYNRYLTRRRRIEIAHALCLTERQIKIWFQNRRMKWKKES) constitute a DNA-binding region (homeobox). S214 is subject to Phosphoserine.

Belongs to the Antp homeobox family.

It is found in the nucleus. Its function is as follows. Sequence-specific transcription factor which is part of a developmental regulatory system that provides cells with specific positional identities on the anterior-posterior axis. The protein is Homeobox protein Hox-B6 (Hoxb6) of Mus musculus (Mouse).